We begin with the raw amino-acid sequence, 368 residues long: Serine/threonine-protein phosphatase PP2A-like PPG1 (368 aa).

The Mn(2+) site is built by D50, H52, D78, and N110. The active-site Proton donor is the H111. 2 residues coordinate Mn(2+): H161 and H247.

It belongs to the PPP phosphatase family. PP-2A subfamily. In terms of assembly, inactivated in a complex with phosphatase methylesterase PPE1 (PP2Ai). Interacts with phosphatase 2A activator RRD1, which can reactivate PP2Ai by dissociating the catalytic subunit from the complex. Interacts with TAP42. It depends on Mn(2+) as a cofactor. In terms of processing, reversibly methyl esterified on Leu-368 by leucine carboxyl methyltransferase 1 (PPM1) and protein phosphatase methylesterase 1 (PPE1). Carboxyl methylation influences the affinity of the catalytic subunit for the different regulatory subunits, thereby modulating the PP2A holoenzyme's substrate specificity, enzyme activity and cellular localization.

The catalysed reaction is O-phospho-L-seryl-[protein] + H2O = L-seryl-[protein] + phosphate. The enzyme catalyses O-phospho-L-threonyl-[protein] + H2O = L-threonyl-[protein] + phosphate. Involved in glycogen accumulation. In Saccharomyces cerevisiae (strain ATCC 204508 / S288c) (Baker's yeast), this protein is Serine/threonine-protein phosphatase PP2A-like PPG1 (PPG1).